Consider the following 154-residue polypeptide: MSTTLAIVRLDPGLPLPSRAHDGDAGVDLYSAEDVELAPGRRALVRTGVAVAVPFGMVGLVHPRSGLATRVGLSIVNSPGTIDAGYRGEIKVALINLDPAAPIVVHRGDRIAQLLVQRVELVELVEVSSFDEAGLASTSRGDGGHGSSGGHASL.

Residues 64-66 (RSG), asparagine 77, 81-83 (TID), and lysine 91 each bind substrate.

This sequence belongs to the dUTPase family. Homotrimer. Mg(2+) serves as cofactor.

It catalyses the reaction dUTP + H2O = dUMP + diphosphate + H(+). It participates in pyrimidine metabolism; dUMP biosynthesis; dUMP from dCTP (dUTP route): step 2/2. Functionally, this enzyme is involved in nucleotide metabolism: it produces dUMP, the immediate precursor of thymidine nucleotides and it decreases the intracellular concentration of dUTP so that uracil cannot be incorporated into DNA. The sequence is that of Deoxyuridine 5'-triphosphate nucleotidohydrolase from Mycobacterium bovis (strain BCG / Pasteur 1173P2).